The following is a 246-amino-acid chain: 5'-nucleotidase SurE (246 aa).

A divalent metal cation-binding residues include D8, D9, S39, and N91.

Belongs to the SurE nucleotidase family. The cofactor is a divalent metal cation.

The protein resides in the cytoplasm. It catalyses the reaction a ribonucleoside 5'-phosphate + H2O = a ribonucleoside + phosphate. Nucleotidase that shows phosphatase activity on nucleoside 5'-monophosphates. The sequence is that of 5'-nucleotidase SurE from Mannheimia succiniciproducens (strain KCTC 0769BP / MBEL55E).